The sequence spans 90 residues: MRIESLLQHDVVERILERLAVNSLPRFKAVSKQWKSTIESQFFQGKHLTHRQQSGDPVVLMVTVYNDDSPHVGSLLLGSRRTRNPTTLII.

One can recognise an F-box domain in the interval 1 to 46; sequence MRIESLLQHDVVERILERLAVNSLPRFKAVSKQWKSTIESQFFQGK.

This is Putative F-box protein At5g16285 from Arabidopsis thaliana (Mouse-ear cress).